Reading from the N-terminus, the 437-residue chain is Glutamyl-tRNA reductase (437 aa).

Substrate-binding positions include 49–52 (TCNR), Ser-109, 114–116 (ETQ), and Gln-120. Cys-50 serves as the catalytic Nucleophile. 189 to 194 (GAGKMS) contacts NADP(+).

Belongs to the glutamyl-tRNA reductase family. Homodimer.

The enzyme catalyses (S)-4-amino-5-oxopentanoate + tRNA(Glu) + NADP(+) = L-glutamyl-tRNA(Glu) + NADPH + H(+). The protein operates within porphyrin-containing compound metabolism; protoporphyrin-IX biosynthesis; 5-aminolevulinate from L-glutamyl-tRNA(Glu): step 1/2. Its function is as follows. Catalyzes the NADPH-dependent reduction of glutamyl-tRNA(Glu) to glutamate 1-semialdehyde (GSA). In Paenibacillus macerans (Bacillus macerans), this protein is Glutamyl-tRNA reductase.